The following is a 74-amino-acid chain: Protein SOM1, mitochondrial (74 aa).

In terms of assembly, component of the mitochondrial inner membrane peptidase (IMP) complex which at least consists of IMP1, IMP2 and SOM1.

It localises to the mitochondrion inner membrane. Functionally, non-catalytic component of the mitochondrial inner membrane peptidase (IMP) complex. IMP catalyzes the removal of signal peptides required for the targeting of proteins from the mitochondrial matrix, across the inner membrane, into the inter-membrane space. SOM1 facilitates cleavage of a subset of IMP substrates. This is Protein SOM1, mitochondrial (SOM1) from Saccharomyces cerevisiae (strain ATCC 204508 / S288c) (Baker's yeast).